A 69-amino-acid polypeptide reads, in one-letter code: Putative membrane protein insertion efficiency factor (69 aa).

Belongs to the UPF0161 family.

Its subcellular location is the cell membrane. Functionally, could be involved in insertion of integral membrane proteins into the membrane. The sequence is that of Putative membrane protein insertion efficiency factor from Alkaliphilus metalliredigens (strain QYMF).